A 280-amino-acid polypeptide reads, in one-letter code: Ribonuclease P protein subunit p38 (280 aa).

At Ala2 the chain carries N-acetylalanine. Phosphoserine occurs at positions 12, 221, and 230. Residues 202 to 227 (WLPDRTQGPTDSLETEPSESQDNEIL) are disordered. Residues 214–226 (LETEPSESQDNEI) show a composition bias toward acidic residues. The interval 254–280 (QPLKIKKLIPNPSKIRKPPKSKKSISK) is disordered. A compositionally biased stretch (basic residues) spans 267–280 (KIRKPPKSKKSISK).

It belongs to the eukaryotic ribosomal protein eL8 family. Component of nuclear RNase P and RNase MRP ribonucleoproteins. RNase P consists of a catalytic RNA moiety and about 10 protein subunits; POP1, POP4, POP5, POP7, RPP14, RPP21, RPP25, RPP30, RPP38 and RPP40. Within the RNase P complex, POP1, POP7 and RPP25 form the 'finger' subcomplex, POP5, RPP14, RPP40 and homodimeric RPP30 form the 'palm' subcomplex, and RPP21, POP4 and RPP38 form the 'wrist' subcomplex. All subunits of the RNase P complex interact with the catalytic RNA. Several subunits of RNase P are also part of the RNase MRP complex. RNase MRP consists of a catalytic RNA moiety and about 8 protein subunits; POP1, POP7, RPP25, RPP30, RPP38, RPP40 and possibly also POP4 and POP5.

Its subcellular location is the nucleus. It localises to the nucleolus. Its function is as follows. Component of ribonuclease P, a ribonucleoprotein complex that generates mature tRNA molecules by cleaving their 5'-ends. Also a component of the MRP ribonuclease complex, which cleaves pre-rRNA sequences. The sequence is that of Ribonuclease P protein subunit p38 (Rpp38) from Mus musculus (Mouse).